Here is a 496-residue protein sequence, read N- to C-terminus: Sodium/sialic acid symporter SiaT (496 aa).

The Periplasmic portion of the chain corresponds to Met-1–Gly-7. A helical membrane pass occupies residues Phe-8–Ser-29. The Cytoplasmic portion of the chain corresponds to Lys-30 to Pro-46. A helical membrane pass occupies residues Gly-47–Leu-59. Ala-56 is a binding site for Na(+). Thr-58 contacts N-acetyl-alpha-neuraminate. Leu-59 contacts Na(+). Residues Ser-60, Thr-63, and Gln-82 each contribute to the N-acetyl-alpha-neuraminate site. At Ser-60 to Trp-76 the chain is on the periplasmic side. A helical transmembrane segment spans residues Thr-77 to Val-92. The Cytoplasmic portion of the chain corresponds to Phe-93 to Phe-116. The helical transmembrane segment at Asp-117–Val-144 threads the bilayer. Arg-135 lines the N-acetyl-alpha-neuraminate pocket. Residues Leu-145–Asp-154 lie on the Periplasmic side of the membrane. The chain crosses the membrane as a helical span at residues Pro-155–Met-172. At Gly-173 to Gly-174 the chain is on the cytoplasmic side. Residues Ile-175–Met-199 traverse the membrane as a helical segment. Asp-182 is a Na(+) binding site. Topologically, residues Ile-200 to Thr-235 are periplasmic. A helical membrane pass occupies residues Ile-236–Thr-252. At Ala-253–Arg-272 the chain is on the cytoplasmic side. The chain crosses the membrane as a helical span at residues Thr-273 to Gly-292. The Periplasmic portion of the chain corresponds to Ser-293–Pro-325. A helical membrane pass occupies residues Ile-326 to Asn-356. Na(+) contacts are provided by Ala-339, Ser-342, Ser-343, Ser-345, and Ser-346. Over Ser-357–Met-374 the chain is Cytoplasmic. A helical membrane pass occupies residues Lys-375 to Val-396. The Periplasmic segment spans residues Leu-397–Ile-403. The chain crosses the membrane as a helical span at residues Trp-404–Phe-427. Topologically, residues Val-428–Asn-432 are cytoplasmic. The helical transmembrane segment at Ala-433–Gly-453 threads the bilayer. The Periplasmic segment spans residues Ser-454 to Asn-457. A helical membrane pass occupies residues Phe-458–Leu-479. Residues Phe-480–Asn-496 are Cytoplasmic-facing.

This sequence belongs to the sodium:solute symporter (SSF) (TC 2.A.21) family.

The protein resides in the cell inner membrane. The enzyme catalyses N-acetyl-alpha-neuraminate(out) + 2 Na(+)(out) = N-acetyl-alpha-neuraminate(in) + 2 Na(+)(in). Its activity is regulated as follows. Both Na(+) sites regulate Neu5Ac transport. The binding energy of the second Na(+) ion may be used to allosterically stabilize the substrate without directly coordinating it. In the absence of external Na(+), the rate is reduced by 78%. In terms of biological role, symporter that uses the Na(+) gradient as the driving force for the uptake of the sialic acid N-acetylneuraminic acid (Neu5Ac). It allows the use of host-derived Neu5Ac as an energy source by P.mirabilis. Also binds N-glycolylneuraminic acid (Neu5Gc) and ketodeoxynonulosonic acid (KDN). Shows the highest affinity for Neu5Ac and Neu5Gc, which commonly occupy the terminal non-reducing position of mammalian cell surface glycoconjugates. This chain is Sodium/sialic acid symporter SiaT, found in Proteus mirabilis (strain HI4320).